Consider the following 777-residue polypeptide: Ribosome-releasing factor 2, mitochondrial (777 aa).

Residues 68-353 form the tr-type G domain; sequence AKIRNIGIMA…AITMYLPSPE (286 aa). Residues 77–84, 141–145, and 195–198 each bind GTP; these read AHIDAGKT, DTPGH, and NKMD.

This sequence belongs to the TRAFAC class translation factor GTPase superfamily. Classic translation factor GTPase family. EF-G/EF-2 subfamily.

Its subcellular location is the mitochondrion. It catalyses the reaction GTP + H2O = GDP + phosphate + H(+). Its function is as follows. Mitochondrial GTPase that mediates the disassembly of ribosomes from messenger RNA at the termination of mitochondrial protein biosynthesis. Acts in collaboration with MRRF. GTP hydrolysis follows the ribosome disassembly and probably occurs on the ribosome large subunit. Not involved in the GTP-dependent ribosomal translocation step during translation elongation. This Bos taurus (Bovine) protein is Ribosome-releasing factor 2, mitochondrial.